We begin with the raw amino-acid sequence, 89 residues long: NADH-ubiquinone oxidoreductase chain 4L (89 aa).

A run of 3 helical transmembrane segments spans residues 1-21 (MNIT…NRKN), 22-42 (IILM…LILV), and 57-77 (IYII…LVAF).

This sequence belongs to the complex I subunit 4L family.

It is found in the mitochondrion membrane. The enzyme catalyses a ubiquinone + NADH + 5 H(+)(in) = a ubiquinol + NAD(+) + 4 H(+)(out). In terms of biological role, core subunit of the mitochondrial membrane respiratory chain NADH dehydrogenase (Complex I) that is believed to belong to the minimal assembly required for catalysis. Complex I functions in the transfer of electrons from NADH to the respiratory chain. The immediate electron acceptor for the enzyme is believed to be ubiquinone. The chain is NADH-ubiquinone oxidoreductase chain 4L (ndh-4L) from Neurospora crassa (strain ATCC 24698 / 74-OR23-1A / CBS 708.71 / DSM 1257 / FGSC 987).